A 132-amino-acid polypeptide reads, in one-letter code: Glycine cleavage system H protein (132 aa).

Residues 24-106 (TVRVGITDFA…YGAGWLLDVQ (83 aa)) form the Lipoyl-binding domain. At Lys-65 the chain carries N6-lipoyllysine.

It belongs to the GcvH family. As to quaternary structure, the glycine cleavage system is composed of four proteins: P, T, L and H. (R)-lipoate is required as a cofactor.

Its function is as follows. The glycine cleavage system catalyzes the degradation of glycine. The H protein shuttles the methylamine group of glycine from the P protein to the T protein. In Mycobacterium avium (strain 104), this protein is Glycine cleavage system H protein.